An 860-amino-acid chain; its full sequence is Receptor-like protein 31 (860 aa).

The signal sequence occupies residues 1-23 (MMIPSQSCFCFFFMVSFFLHTLA). The Extracellular portion of the chain corresponds to 24-809 (SPTLRHCRHD…SEPEEHVINW (786 aa)). N-linked (GlcNAc...) asparagine glycans are attached at residues asparagine 49, asparagine 64, asparagine 88, asparagine 95, asparagine 112, asparagine 117, asparagine 154, asparagine 178, asparagine 202, and asparagine 213. 6 LRR repeats span residues 108 to 131 (QHLHNLTLSNCSLYGDIPSSLGNL), 132 to 155 (FRLTLLDLSYNYLVGQVPPSIGNL), 156 to 179 (SRLTILDLWDNKLVGQLPASIGNL), 181 to 202 (QLEYLIFSHNKFSGNIPVTFSN), 203 to 226 (LTKLLVVNLYNNSFESMLPLDMSG), and 227 to 251 (FQNLDYFNVGENSFSGTLPKSLFTI). One copy of the LRR 7; degenerate repeat lies at 252 to 276 (PSLRWANLEGNMFKGPIEFRNMYSP). LRR repeat units lie at residues 277–301 (STRLQYLFLSQNKFDGPIPDTLSQY), 302–325 (LNLIELDLSFNNLTGSFPTFLFTI), 326–349 (PTLERVNLEGNHLKGPVEFGNMSS), 350–374 (SSSLKFLNFAQNEFNGSIPESVSQY), 376–398 (NLEELHLSFNNFIGTIPRSISKL), 400–419 (KLEYFCLEDNNMVGEVPSWL), 420–444 (WRLTMVALSNNSFNSFGESSEGLDE), 446–468 (QVQWLDLSSNSFQGPFPHWICKL), 469–494 (RSLEILIMSDNRFNGSIPPCLSSFMV), 496–517 (LTDLILRNNSLSGPLPDIFVNA), 518–541 (TKLLSLDVSRNKLDGVLPKSLIHC), 543–564 (AMQLLNVRSNKIKDKFPSWLGS), 565–591 (LPSLHVLILRSNEFYGTLYQPHASIGF), and 592–615 (QSLRVIDVSHNDLIGTLPSFYFSS). 3 N-linked (GlcNAc...) asparagine glycosylation sites follow: asparagine 313, asparagine 346, and asparagine 364. Asparagine 429 carries an N-linked (GlcNAc...) asparagine glycan. Asparagine 482, asparagine 503, and asparagine 516 each carry an N-linked (GlcNAc...) asparagine glycan. N-linked (GlcNAc...) asparagine glycosylation is found at asparagine 642, asparagine 673, and asparagine 697. LRR repeat units lie at residues 665–690 (INEENKVINFSGNRFSGNIPESIGLL), 691–714 (KELRHLNLSSNAFTGNIPQSLANL), 716–738 (KLEALDLSLNQLSGQIPQGLGSL), and 740–763 (FMSTMNFSYNFLEGPVPKSTQFQG). Asparagine 745 and asparagine 765 each carry an N-linked (GlcNAc...) asparagine glycan. Residues 810–830 (IAAGIAYGPGVVCGLVIGHIF) form a helical membrane-spanning segment. The Cytoplasmic portion of the chain corresponds to 831–860 (LSHKHECWFMEKFRRKKPKVVTRIARPSKH).

Belongs to the RLP family.

The protein resides in the cell membrane. This is Receptor-like protein 31 from Arabidopsis thaliana (Mouse-ear cress).